The chain runs to 223 residues: Transcription factor bHLH75 (223 aa).

The segment at 58 to 100 (FPNLLHGNTRRKGNKEESGSKRRRKRSEEEEAMNGDETQKPKD) is disordered. In terms of domain architecture, bHLH spans 110-160 (QATDSHSLAERVRREKINERLKCLQDLVPGCYKAMGMAVMLDVIIDYVRSL).

Homodimer. In terms of tissue distribution, expressed in leaves, stems, and flowers.

The protein resides in the nucleus. The sequence is that of Transcription factor bHLH75 (BHLH75) from Arabidopsis thaliana (Mouse-ear cress).